Here is a 150-residue protein sequence, read N- to C-terminus: Ribosome maturation factor RimP (150 aa).

The protein belongs to the RimP family.

The protein localises to the cytoplasm. Its function is as follows. Required for maturation of 30S ribosomal subunits. This Yersinia pestis bv. Antiqua (strain Antiqua) protein is Ribosome maturation factor RimP.